A 118-amino-acid polypeptide reads, in one-letter code: Protein YoeF (118 aa).

This is Protein YoeF (yoeF) from Escherichia coli (strain K12).